Reading from the N-terminus, the 368-residue chain is DNA-dependent metalloprotease dvc-1 (368 aa).

In terms of domain architecture, SprT-like spans 21 to 190; the sequence is HALFIQFDAR…QSCGGNFLKV (170 aa). Zn(2+) is bound at residue H89. E90 is a catalytic residue. Zn(2+) is bound by residues H93 and H108. Positions 187-309 are disordered; that stretch reads FLKVKEPEGY…PVNFTSPSSA (123 aa). A compositionally biased stretch (basic and acidic residues) spans 226 to 237; it reads TLDDFFKKDGKN. The segment covering 238 to 274 has biased composition (low complexity); it reads SSDNSTSKSPTKPSTSLFTGSGQKLGGSSSTSSLLNS. A UBZ4-type zinc finger spans residues 344–368; sequence SVICPSCNTEVMENLIHGHLDYCLG. C347, C350, H362, and C366 together coordinate Zn(2+).

It belongs to the Spartan family. As to quaternary structure, interacts with vcp/p97 (cdc-48.1 or cdc-48.2).

The protein resides in the nucleus. It localises to the chromosome. Functionally, DNA-dependent metalloendopeptidase that mediates the proteolytic cleavage of covalent DNA-protein cross-links (DPCs) during DNA synthesis, thereby playing a key role in maintaining genomic integrity. DPCs are highly toxic DNA lesions that interfere with essential chromatin transactions, such as replication and transcription, and which are induced by reactive agents, such as UV light or formaldehyde. Associates with the DNA replication machinery and specifically removes DPCs during DNA synthesis. Regulator of UV-induced DNA damage response: required to protect genome stability during DNA replication, possibly via recruitment of vcp/p97 (cdc-48.1 or cdc-48.2) recruitment. This chain is DNA-dependent metalloprotease dvc-1, found in Caenorhabditis elegans.